The primary structure comprises 131 residues: MSWQSYVDDHLMCDVEGNHLTAAAILGQDGSVWAQSAKFPQLKPQEIDGIKKDFEEPGFLAPTGLFLGGEKYMVIQGEQGAVIRGKKGPGGVTIKKTNQALVFGFYDEPMTGGQCNLVVERLGDYLIESEL.

It belongs to the profilin family. In terms of assembly, occurs in many kinds of cells as a complex with monomeric actin in a 1:1 ratio. As to expression, expressed at low levels roots, leaves, stems, flowers and siliques. Expressed in leaf epidermal cells, trichomes and stem epidermal cells. Detected in phloem exudates (at protein level).

It localises to the cytoplasm. It is found in the cytoskeleton. Binds to actin monomers and regulates the organization of the actin cytoskeleton. At high concentrations, profilin prevents the polymerization of actin, whereas it enhances it at low concentrations. At low concentrations, associates with the poly-proline motif of formins to enhance actin filament elongation rate. Binds ACT1, ACT7 and ACT11 and inhibits actin polymerization. Coordinates the stochastic dynamic properties of actin filaments by modulating formin-mediated actin nucleation and assembly during axial cell expansion. Binds G-actin and poly-L-proline in vitro. Inhibits cell growth of various pathogenic fungal strains. May play a role as antifungal proteins in the defense system against fungal pathogen attacks. In Arabidopsis thaliana (Mouse-ear cress), this protein is Profilin-1.